The primary structure comprises 188 residues: ATP synthase subunit b 1 (188 aa).

The chain crosses the membrane as a helical span at residues 35–55; sequence VHFSSHFFWLAISFGFFYLFI.

It belongs to the ATPase B chain family. As to quaternary structure, F-type ATPases have 2 components, F(1) - the catalytic core - and F(0) - the membrane proton channel. F(1) has five subunits: alpha(3), beta(3), gamma(1), delta(1), epsilon(1). F(0) has three main subunits: a(1), b(2) and c(10-14). The alpha and beta chains form an alternating ring which encloses part of the gamma chain. F(1) is attached to F(0) by a central stalk formed by the gamma and epsilon chains, while a peripheral stalk is formed by the delta and b chains.

It is found in the cell inner membrane. Its function is as follows. F(1)F(0) ATP synthase produces ATP from ADP in the presence of a proton or sodium gradient. F-type ATPases consist of two structural domains, F(1) containing the extramembraneous catalytic core and F(0) containing the membrane proton channel, linked together by a central stalk and a peripheral stalk. During catalysis, ATP synthesis in the catalytic domain of F(1) is coupled via a rotary mechanism of the central stalk subunits to proton translocation. In terms of biological role, component of the F(0) channel, it forms part of the peripheral stalk, linking F(1) to F(0). The polypeptide is ATP synthase subunit b 1 (Bartonella tribocorum (strain CIP 105476 / IBS 506)).